The chain runs to 946 residues: Phosphatidylinositol 4,5-bisphosphate 5-phosphatase INP51 (946 aa).

One can recognise an SAC domain in the interval 151–480 (LKKLFSDGTF…YYWLDRTYTK (330 aa)). Disordered regions lie at residues 872–902 (SDSI…SDLK) and 927–946 (PKRD…FIER). The segment covering 936–946 (ENEDEPLFIER) has biased composition (acidic residues).

The protein belongs to the synaptojanin family. It in the central section; belongs to the inositol 1,4,5-trisphosphate 5-phosphatase family. Interacts with IRS4 and TAX4.

Its subcellular location is the cytoplasm. The protein resides in the cytoskeleton. It localises to the actin patch. The enzyme catalyses a 1,2-diacyl-sn-glycero-3-phospho-(1D-myo-inositol-4,5-bisphosphate) + H2O = a 1,2-diacyl-sn-glycero-3-phospho-(1D-myo-inositol 4-phosphate) + phosphate. Its activity is regulated as follows. IRS4 and TAX4 are both positive regulator of INP51 activity and phosphatidylinositol 4,5-bisphosphate turnover. Controls the cellular levels and subcellular distribution of phosphatidylinositol 4,5-bisphosphate (PtdIns(4,5)P2). Does not utilize phosphatidylinositol 3,5-bisphosphate (PtdIns(3,5)P2), nor phosphatidylinositol 3-phosphate (PtdIns(3)P) and phosphatidylinositol 4-phosphate (PtdIns(4)P). Plays an essential role in a TGN (trans Golgi network)-to-early endosome pathway. Involved in endocytosis and acts as a negative regulator of the Slm pathway which modulates polarized actin assembly and growth. This chain is Phosphatidylinositol 4,5-bisphosphate 5-phosphatase INP51 (INP51), found in Saccharomyces cerevisiae (strain ATCC 204508 / S288c) (Baker's yeast).